We begin with the raw amino-acid sequence, 153 residues long: ORM1-like protein 3 (153 aa).

The interval 1-17 (MNVGTAHSEVNPNTRVM) is important for ceramide level-sensing. The Cytoplasmic segment spans residues 1-21 (MNVGTAHSEVNPNTRVMNSRG). The next 2 helical transmembrane spans lie at 22–42 (IWLS…SIPF) and 43–63 (VSVP…MYIF). Residues 64–94 (LHTVKGTPFETPDQGKARLLTHWEQMDYGVQ) are Cytoplasmic-facing. The helical transmembrane segment at 95–117 (FTASRKFLTITPIVLYFLTSFYT) threads the bilayer. Topologically, residues 118 to 121 (KYDQ) are extracellular. The helical transmembrane segment at 122 to 142 (VHFILNTVSLMTVLIPKLPQL) threads the bilayer. Pro-137 is modified (hydroxyproline). Residues 143-153 (HGVRIFGINKY) lie on the Cytoplasmic side of the membrane.

It belongs to the ORM family. As to quaternary structure, ceramide-sensitive subunit of the serine palmitoyltransferase (SPT) complex, which is also composed of SPTLC1, SPTLC2/3 and SPTSSA/B. Post-translationally, when hydroxylated at Pro-137, ubiquitinated via 'Lys-48'-linkage, leading to proteasomal degradation. In endothelial cells, ORMDL3 proteasomal degradation is controlled by the sphingosine 1-phosphate receptor signaling pathway.

Its subcellular location is the endoplasmic reticulum membrane. Plays an essential role in the homeostatic regulation of sphingolipid de novo biosynthesis by modulating the activity of the serine palmitoyltransferase (SPT) in response to ceramide levels. When complexed to SPT, the binding of ceramides to its N-terminus stabilizes a conformation that block SPT substrate entry, hence preventing SPT catalytic activity. Through this mechanism, maintains ceramide levels at sufficient concentrations for the production of complex sphingolipids, but which prevents the accumulation of ceramides to levels that trigger apoptosis. The sequence is that of ORM1-like protein 3 (Ormdl3) from Mus musculus (Mouse).